A 222-amino-acid polypeptide reads, in one-letter code: MRVSKSLILITLSALVISFAEAYDPSPLQDFCVAIDDLKNGVFVNGKFCKDPKQAKAEDFFFSGLNQAGSTNNKVRSNVTTVNVDQIPGLNTMGISLVRIDYAPYGQNPPHTHPRATEILVLIEGTLYVGFVSSNQDNNRLFAKVLYPGDVFVFPIGMIHFQVNIGKTPAVAFAGLSSQNAGVITIADTVFGSTPPINPDILAQAFQLDVNIVEDLEAKFRN.

Positions 1–18 (MRVSKSLILITLSALVIS) are cleaved as a signal peptide. The cysteines at positions 32 and 49 are disulfide-linked. Residues 63 to 214 (SGLNQAGSTN…AFQLDVNIVE (152 aa)) enclose the Cupin type-1 domain. Asn78 carries N-linked (GlcNAc...) asparagine glycosylation. The Mn(2+) site is built by His111, His113, Glu118, and His160.

It belongs to the germin family. Oligomer (believed to be a pentamer but probably hexamer).

Its subcellular location is the secreted. It localises to the extracellular space. It is found in the apoplast. May play a role in plant defense. Probably has no oxalate oxidase activity even if the active site is conserved. In Arabidopsis thaliana (Mouse-ear cress), this protein is Germin-like protein subfamily 1 member 13 (GLP6).